A 284-amino-acid chain; its full sequence is Spermidine/putrescine transport system permease protein PotC homolog (284 aa).

6 helical membrane-spanning segments follow: residues 13–33, 76–96, 116–136, 143–163, 189–209, and 242–262; these read YFFL…LVSL, IIIG…SAFA, LATP…NTWL, GFFT…LILI, FFHI…LVVF, and AWAI…VCLI. Residues 72–263 enclose the ABC transmembrane type-1 domain; that stretch reads LINSIIIGVI…ISVLGVCLIT (192 aa).

Belongs to the binding-protein-dependent transport system permease family. CysTW subfamily.

The protein resides in the cell membrane. Functionally, required for the activity of the bacterial transport system of putrescine and spermidine. In Mycoplasma genitalium (strain ATCC 33530 / DSM 19775 / NCTC 10195 / G37) (Mycoplasmoides genitalium), this protein is Spermidine/putrescine transport system permease protein PotC homolog (potC).